Reading from the N-terminus, the 94-residue chain is Ubiquitin-like protein ATG12B (94 aa).

Ala2 carries the N-acetylalanine modification. Gly94 is covalently cross-linked (Glycyl lysine isopeptide (Gly-Lys) (interchain with K-128 in ATG5)).

This sequence belongs to the ATG12 family. In terms of tissue distribution, ubiquitous.

It is found in the cytoplasm. Its function is as follows. Ubiquitin-like protein involved in cytoplasm to vacuole transport (Cvt) and autophagy vesicles formation. Conjugation with ATG5 through a ubiquitin-like conjugating system involving also ATG7 as an E1-like activating enzyme and ATG10 as an E2-like conjugating enzyme, is essential for its function. ATG12/ATG5 conjugate has an essential role in plant nutrient recycling. The protein is Ubiquitin-like protein ATG12B (ATG12B) of Arabidopsis thaliana (Mouse-ear cress).